A 233-amino-acid chain; its full sequence is Uridylate kinase (233 aa).

Residues 9-12 (KLSG), Gly-51, and Arg-55 each bind ATP. UMP is bound by residues Asp-69 and 130-137 (TGNPFFST). Residues Asn-158, Tyr-164, and Asp-167 each coordinate ATP.

This sequence belongs to the UMP kinase family. As to quaternary structure, homohexamer.

It is found in the cytoplasm. The catalysed reaction is UMP + ATP = UDP + ADP. It functions in the pathway pyrimidine metabolism; CTP biosynthesis via de novo pathway; UDP from UMP (UMPK route): step 1/1. Inhibited by UTP. Its function is as follows. Catalyzes the reversible phosphorylation of UMP to UDP. This is Uridylate kinase from Thermus thermophilus (strain ATCC BAA-163 / DSM 7039 / HB27).